The sequence spans 570 residues: CDKN2A-interacting protein (570 aa).

Ala2 is subject to N-acetylalanine. Positions 19-126 (VETLRCEGET…KVKKRGISSS (108 aa)) constitute an XRN2-binding (XTBD) domain. Residues 122–345 (GISSSNEGVE…TSLLMPKSSS (224 aa)) form a disordered region. Phosphoserine is present on Ser124. The segment covering 147–162 (VERDHGKKSAKTDRSA) has biased composition (basic and acidic residues). Residues 167–183 (SSGSKGSSTKSESSGTS) are compositionally biased toward low complexity. Lys176 is covalently cross-linked (Glycyl lysine isopeptide (Lys-Gly) (interchain with G-Cter in SUMO1)). Positions 184–198 (ARSNSGVSHQNSSTS) are enriched in polar residues. Over residues 203–221 (SVCSQSSSNSSQVTSAGSG) the composition is skewed to low complexity. Over residues 224-233 (SEPEAPDKHG) the composition is skewed to basic and acidic residues. At Ser234 the chain carries Phosphoserine. Low complexity-rich tracts occupy residues 234-248 (SASF…SLNS) and 271-301 (SSVS…PLLS). The segment covering 302-317 (CKSSSETASSGLTTKA) has biased composition (polar residues). A compositionally biased stretch (low complexity) spans 318–345 (SSEANISSSVSKNSSSSGTSLLMPKSSS). Position 378 is a phosphoserine (Ser378). Residues 383 to 407 (SQLASKSSSQSSTSQLPSKSTSQSS) are disordered. Residues 452–527 (NHGELLNAAI…SREALKLFLK (76 aa)) enclose the DRBM domain.

It belongs to the CARF family. Interacts with CDKN2A/p14ARF, p53/TP53 and MDM2. Interacts with CHEK2 and MAPK3. Interacts with XRN2. May be ubiquitinated.

The protein localises to the nucleus. The protein resides in the nucleoplasm. Regulates DNA damage response and cell proliferation in a dose-dependent manner through a number of signaling pathways involved in cell proliferation, apoptosis and senescence. In Rattus norvegicus (Rat), this protein is CDKN2A-interacting protein (Cdkn2aip).